The chain runs to 157 residues: MGFPKVERLLINYKTLDEFKKFKGCGAQELSMLEELQANIIENNSESPFYGIYYGGSLIARMSLYMKRNGGEPFEITGTYLELYKLEVLPTFQKQGFGEMLVNYAKGLQFPIKTIARIHSAGFWDKLNFQPVSVPDGDFYVWHPETNLNAVTNEESA.

The region spanning 9–146 is the N-acetyltransferase domain; sequence LLINYKTLDE…GDFYVWHPET (138 aa).

This is an uncharacterized protein from Bacillus cereus (strain AH187).